Here is a 330-residue protein sequence, read N- to C-terminus: Phosphate acyltransferase (330 aa).

The protein belongs to the PlsX family. As to quaternary structure, homodimer. Probably interacts with PlsY.

It localises to the cytoplasm. It catalyses the reaction a fatty acyl-[ACP] + phosphate = an acyl phosphate + holo-[ACP]. Its pathway is lipid metabolism; phospholipid metabolism. Its function is as follows. Catalyzes the reversible formation of acyl-phosphate (acyl-PO(4)) from acyl-[acyl-carrier-protein] (acyl-ACP). This enzyme utilizes acyl-ACP as fatty acyl donor, but not acyl-CoA. This is Phosphate acyltransferase from Bacillus thuringiensis (strain Al Hakam).